The chain runs to 164 residues: MTTPDKQTFRDAMACVGAAVNIITTDGPAGRAGFTASAVCSVTDSPPTLLVCLNRGASVWPTFSENRTLCVNTLSAGQEPLSNLFGGKTPMEDRFAAARWQTGETGCPRLEEALASFDCRISQVVSVGTHDILFCDIVSIIRHPAPQGLVWFDRGYHALMRPAC.

This sequence belongs to the non-flavoprotein flavin reductase family. RutF subfamily.

The enzyme catalyses FMNH2 + NAD(+) = FMN + NADH + 2 H(+). Its function is as follows. Catalyzes the reduction of FMN to FMNH2 which is used to reduce pyrimidine by RutA via the Rut pathway. The chain is FMN reductase (NADH) RutF from Enterobacter cloacae subsp. cloacae (strain ATCC 13047 / DSM 30054 / NBRC 13535 / NCTC 10005 / WDCM 00083 / NCDC 279-56).